The chain runs to 550 residues: Neuronal acetylcholine receptor subunit alpha-9-II (550 aa).

Positions 1–20 (MRKMVPVVCFATMLLQVAHS) are cleaved as a signal peptide. Topologically, residues 21–233 (AQGRYAQQLL…YTVLLQRRSS (213 aa)) are extracellular. Asn52 carries N-linked (GlcNAc...) asparagine glycosylation. Cys150 and Cys164 are joined by a disulfide. Asn165 carries an N-linked (GlcNAc...) asparagine glycan. An intrachain disulfide couples Cys214 to Cys215. A run of 3 helical transmembrane segments spans residues 234–254 (FYIFNLLLPCFLISFLAPLGF), 264–284 (VSLGVTVLLALTVFQLMVAES), and 298–318 (YIATMTMITASTALTIFIMNI). Residues 319–528 (HFCGAEAKPV…WKRVAKVMDR (210 aa)) are Cytoplasmic-facing. The interval 357 to 439 (TSSSSSSSSS…HLSSSKYEGF (83 aa)) is disordered. Positions 358–367 (SSSSSSSSSS) are enriched in low complexity. Over residues 413–422 (RHPKPRHQHH) the composition is skewed to basic residues. A helical membrane pass occupies residues 529–549 (FFMWIFFIMVFLMSILIIGKA).

Belongs to the ligand-gated ion channel (TC 1.A.9) family. Acetylcholine receptor (TC 1.A.9.1) subfamily. Expressed in the brain, liver, olfactory mucosa, pituitary gland and hair cells of the saccule.

The protein localises to the postsynaptic cell membrane. It is found in the cell membrane. This chain is Neuronal acetylcholine receptor subunit alpha-9-II, found in Oncorhynchus mykiss (Rainbow trout).